Reading from the N-terminus, the 242-residue chain is 4-hydroxy-tetrahydrodipicolinate reductase (242 aa).

Residues G8–M13, G75–T77, and A99–M102 each bind NAD(+). The active-site Proton donor/acceptor is the H131. H132 contributes to the (S)-2,3,4,5-tetrahydrodipicolinate binding site. The Proton donor role is filled by K135. G141 to T142 provides a ligand contact to (S)-2,3,4,5-tetrahydrodipicolinate.

The protein belongs to the DapB family.

Its subcellular location is the cytoplasm. It carries out the reaction (S)-2,3,4,5-tetrahydrodipicolinate + NAD(+) + H2O = (2S,4S)-4-hydroxy-2,3,4,5-tetrahydrodipicolinate + NADH + H(+). It catalyses the reaction (S)-2,3,4,5-tetrahydrodipicolinate + NADP(+) + H2O = (2S,4S)-4-hydroxy-2,3,4,5-tetrahydrodipicolinate + NADPH + H(+). It functions in the pathway amino-acid biosynthesis; L-lysine biosynthesis via DAP pathway; (S)-tetrahydrodipicolinate from L-aspartate: step 4/4. Catalyzes the conversion of 4-hydroxy-tetrahydrodipicolinate (HTPA) to tetrahydrodipicolinate. This is 4-hydroxy-tetrahydrodipicolinate reductase from Campylobacter jejuni subsp. jejuni serotype O:2 (strain ATCC 700819 / NCTC 11168).